Consider the following 507-residue polypeptide: Maturase K (507 aa).

It belongs to the intron maturase 2 family. MatK subfamily.

Its subcellular location is the plastid. The protein localises to the chloroplast. Usually encoded in the trnK tRNA gene intron. Probably assists in splicing its own and other chloroplast group II introns. This chain is Maturase K, found in Persea americana (Avocado).